The following is a 2837-amino-acid chain: Bifunctional DNA-directed RNA polymerase subunit beta-beta' (2837 aa).

The tract at residues 1 to 1433 (MVDSSYMYAS…CLNVDLKQND (1433 aa)) is DNA-directed RNA polymerase subunit beta. Positions 1436 to 2837 (IEDISHTNIA…ESVVAYDQSN (1402 aa)) are DNA-directed RNA polymerase subunit beta'. Zn(2+) contacts are provided by Cys1501, Cys1503, Cys1516, and Cys1519. 3 residues coordinate Mg(2+): Asp1893, Asp1895, and Asp1897. Zn(2+)-binding residues include Cys2235, Cys2309, Cys2316, and Cys2319.

It in the N-terminal section; belongs to the RNA polymerase beta chain family. The protein in the C-terminal section; belongs to the RNA polymerase beta' chain family. In terms of assembly, the RNAP catalytic core consists of 2 alpha, 1 beta/beta' and 1 omega subunit. When a sigma factor is associated with the core the holoenzyme is formed, which can initiate transcription. The cofactor is Mg(2+). Zn(2+) serves as cofactor.

It catalyses the reaction RNA(n) + a ribonucleoside 5'-triphosphate = RNA(n+1) + diphosphate. Functionally, DNA-dependent RNA polymerase catalyzes the transcription of DNA into RNA using the four ribonucleoside triphosphates as substrates. This chain is Bifunctional DNA-directed RNA polymerase subunit beta-beta' (rpoBC), found in Wolbachia pipientis wMel.